Here is a 509-residue protein sequence, read N- to C-terminus: Glutamyl-tRNA(Gln) amidotransferase subunit B, mitochondrial (509 aa).

It belongs to the GatB/GatE family. GatB subfamily. Subunit of the heterotrimeric GatFAB amidotransferase (AdT) complex, composed of A, B and F subunits.

It is found in the mitochondrion. It carries out the reaction L-glutamyl-tRNA(Gln) + L-glutamine + ATP + H2O = L-glutaminyl-tRNA(Gln) + L-glutamate + ADP + phosphate + H(+). Allows the formation of correctly charged Gln-tRNA(Gln) through the transamidation of misacylated Glu-tRNA(Gln) in the mitochondria. The reaction takes place in the presence of glutamine and ATP through an activated gamma-phospho-Glu-tRNA(Gln). In Candida dubliniensis (strain CD36 / ATCC MYA-646 / CBS 7987 / NCPF 3949 / NRRL Y-17841) (Yeast), this protein is Glutamyl-tRNA(Gln) amidotransferase subunit B, mitochondrial.